Here is a 139-residue protein sequence, read N- to C-terminus: ATP synthase epsilon chain (139 aa).

The protein belongs to the ATPase epsilon chain family. In terms of assembly, F-type ATPases have 2 components, CF(1) - the catalytic core - and CF(0) - the membrane proton channel. CF(1) has five subunits: alpha(3), beta(3), gamma(1), delta(1), epsilon(1). CF(0) has three main subunits: a, b and c.

The protein localises to the cell inner membrane. In terms of biological role, produces ATP from ADP in the presence of a proton gradient across the membrane. This Acinetobacter baumannii (strain SDF) protein is ATP synthase epsilon chain.